Consider the following 195-residue polypeptide: Guanylate kinase (195 aa).

The Guanylate kinase-like domain maps to 7–186 (GVLLVLSSPS…SVEEISSILD (180 aa)). Residue 14–21 (SPSGAGKT) coordinates ATP.

It belongs to the guanylate kinase family.

It is found in the cytoplasm. It carries out the reaction GMP + ATP = GDP + ADP. Essential for recycling GMP and indirectly, cGMP. The sequence is that of Guanylate kinase from Wolbachia sp. subsp. Brugia malayi (strain TRS).